We begin with the raw amino-acid sequence, 339 residues long: Phenylalanine--tRNA ligase alpha subunit (339 aa).

Glutamate 253 lines the Mg(2+) pocket.

It belongs to the class-II aminoacyl-tRNA synthetase family. Phe-tRNA synthetase alpha subunit type 1 subfamily. Tetramer of two alpha and two beta subunits. It depends on Mg(2+) as a cofactor.

It localises to the cytoplasm. It catalyses the reaction tRNA(Phe) + L-phenylalanine + ATP = L-phenylalanyl-tRNA(Phe) + AMP + diphosphate + H(+). The chain is Phenylalanine--tRNA ligase alpha subunit from Alcanivorax borkumensis (strain ATCC 700651 / DSM 11573 / NCIMB 13689 / SK2).